A 288-amino-acid polypeptide reads, in one-letter code: ATP synthase gamma chain (288 aa).

It belongs to the ATPase gamma chain family. As to quaternary structure, F-type ATPases have 2 components, CF(1) - the catalytic core - and CF(0) - the membrane proton channel. CF(1) has five subunits: alpha(3), beta(3), gamma(1), delta(1), epsilon(1). CF(0) has three main subunits: a, b and c.

It localises to the cell inner membrane. Functionally, produces ATP from ADP in the presence of a proton gradient across the membrane. The gamma chain is believed to be important in regulating ATPase activity and the flow of protons through the CF(0) complex. The polypeptide is ATP synthase gamma chain (Rickettsia bellii (strain RML369-C)).